A 405-amino-acid polypeptide reads, in one-letter code: Glucose-1-phosphate adenylyltransferase (405 aa).

Residues Tyr96, Gly161, 176-177 (EK), and Ser194 contribute to the alpha-D-glucose 1-phosphate site.

This sequence belongs to the bacterial/plant glucose-1-phosphate adenylyltransferase family. In terms of assembly, homotetramer.

The enzyme catalyses alpha-D-glucose 1-phosphate + ATP + H(+) = ADP-alpha-D-glucose + diphosphate. It participates in glycan biosynthesis; glycogen biosynthesis. In terms of biological role, involved in the biosynthesis of ADP-glucose, a building block required for the elongation reactions to produce glycogen. Catalyzes the reaction between ATP and alpha-D-glucose 1-phosphate (G1P) to produce pyrophosphate and ADP-Glc. The sequence is that of Glucose-1-phosphate adenylyltransferase from Photobacterium profundum (strain SS9).